A 70-amino-acid polypeptide reads, in one-letter code: uncharacterized protein (70 aa).

The N-terminal stretch at 1-16 (MKLLLVLITLIIAALA) is a signal peptide.

This is an uncharacterized protein from Orgyia pseudotsugata (Douglas-fir tussock moth).